The sequence spans 552 residues: Putative transport protein HS_1470 (552 aa).

5 helical membrane passes run 4–24 (IAIT…IGHW), 28–48 (GVGL…HFMN), 67–87 (LILF…ASLL), 95–115 (GLAT…YKVV), and 157–177 (MAYA…MWLI). RCK C-terminal domains lie at 190–275 (KQFQ…VIGE) and 277–360 (IDMP…IIGN). 6 helical membrane-spanning segments follow: residues 370 to 390 (MLPV…PFYI), 402 to 424 (AGGP…LYWF), 438 to 458 (IVLF…DTLV), 463 to 483 (LEWM…TGII), 495 to 515 (LCGL…ANAI), and 529 to 549 (VYPL…ILLW).

This sequence belongs to the AAE transporter (TC 2.A.81) family. YidE subfamily.

It is found in the cell membrane. In Histophilus somni (strain 129Pt) (Haemophilus somnus), this protein is Putative transport protein HS_1470.